The primary structure comprises 118 residues: Class I hydrophobin hum2 (118 aa).

The first 19 residues, 1–19 (MQFKTIFATLAAFAAVASA), serve as a signal peptide directing secretion. Intrachain disulfides connect Cys-33/Cys-98, Cys-40/Cys-92, Cys-41/Cys-74, and Cys-99/Cys-112.

This sequence belongs to the fungal hydrophobin family. In terms of assembly, self-assembles to form functional amyloid fibrils called rodlets. Self-assembly into fibrillar rodlets occurs spontaneously at hydrophobic:hydrophilic interfaces and the rodlets further associate laterally to form amphipathic monolayers.

It is found in the secreted. The protein localises to the cell wall. Functionally, aerial growth, conidiation, and dispersal of filamentous fungi in the environment rely upon a capability of their secreting small amphipathic proteins called hydrophobins (HPBs) with low sequence identity. Class I can self-assemble into an outermost layer of rodlet bundles on aerial cell surfaces, conferring cellular hydrophobicity that supports fungal growth, development and dispersal; whereas Class II form highly ordered films at water-air interfaces through intermolecular interactions but contribute nothing to the rodlet structure. Hum2 is a class I hydrophobin which that plays a role in, but seems not to be crucial for the formation of aerial hyphae. Hydrophobins of Mycosarcoma maydis have been functionally replaced, at least partially, by repellents. This Mycosarcoma maydis (Corn smut fungus) protein is Class I hydrophobin hum2.